The primary structure comprises 192 residues: GTP cyclohydrolase-2 (192 aa).

Residue 50-54 participates in GTP binding; that stretch reads RLHSE. 3 residues coordinate Zn(2+): C55, C66, and C68. GTP contacts are provided by residues 92-94 and T114; that span reads EGR. D126 serves as the catalytic Proton acceptor. R128 serves as the catalytic Nucleophile. GTP contacts are provided by T149 and K154.

The protein belongs to the GTP cyclohydrolase II family. It depends on Zn(2+) as a cofactor.

It catalyses the reaction GTP + 4 H2O = 2,5-diamino-6-hydroxy-4-(5-phosphoribosylamino)-pyrimidine + formate + 2 phosphate + 3 H(+). It participates in cofactor biosynthesis; riboflavin biosynthesis; 5-amino-6-(D-ribitylamino)uracil from GTP: step 1/4. Functionally, catalyzes the conversion of GTP to 2,5-diamino-6-ribosylamino-4(3H)-pyrimidinone 5'-phosphate (DARP), formate and pyrophosphate. The sequence is that of GTP cyclohydrolase-2 from Helicobacter pylori (strain Shi470).